Here is a 128-residue protein sequence, read N- to C-terminus: Large ribosomal subunit protein eL8 (128 aa).

It belongs to the eukaryotic ribosomal protein eL8 family. As to quaternary structure, part of the 50S ribosomal subunit. Probably part of the RNase P complex.

The protein resides in the cytoplasm. Functionally, multifunctional RNA-binding protein that recognizes the K-turn motif in ribosomal RNA, the RNA component of RNase P, box H/ACA, box C/D and box C'/D' sRNAs. This chain is Large ribosomal subunit protein eL8, found in Ignicoccus hospitalis (strain KIN4/I / DSM 18386 / JCM 14125).